Consider the following 122-residue polypeptide: Large ribosomal subunit protein uL14 (122 aa).

This sequence belongs to the universal ribosomal protein uL14 family. Part of the 50S ribosomal subunit. Forms a cluster with proteins L3 and L19. In the 70S ribosome, L14 and L19 interact and together make contacts with the 16S rRNA in bridges B5 and B8.

Functionally, binds to 23S rRNA. Forms part of two intersubunit bridges in the 70S ribosome. The chain is Large ribosomal subunit protein uL14 from Chlamydia caviae (strain ATCC VR-813 / DSM 19441 / 03DC25 / GPIC) (Chlamydophila caviae).